The primary structure comprises 415 residues: von Willebrand factor A domain-containing protein 1 (415 aa).

The first 18 residues, 1-18, serve as a signal peptide directing secretion; sequence MLFWTAFSMALSLRLALA. The 176-residue stretch at 34-209 folds into the VWFA domain; it reads DLLFLLDSSA…IIARELRGSI (176 aa). Phosphoserine is present on residues Ser-74, Ser-80, and Ser-93. 2 consecutive Fibronectin type-III domains span residues 214 to 305 and 307 to 403; these read QPQQ…LQEE and GPER…TRAP. Residue Asn-264 is glycosylated (N-linked (GlcNAc...) asparagine). A disulfide bridge links Cys-369 with Cys-393. Positions 391–415 are disordered; it reads KACTASGARTRAPQSMRPEAGPREP.

As to quaternary structure, homodimer or homomultimer; disulfide-linked. Interacts with HSPG2. N-glycosylated. Expressed at high levels in the chondrocytes. Detected in the vasculature of neural tissues, in basement membrane structures of the peripheral nervous system, in the apical ectodermal ridge of developing limb buds, and in skeletal and cardiac muscle (at protein level).

It localises to the secreted. The protein resides in the extracellular space. It is found in the extracellular matrix. The protein localises to the basement membrane. Promotes matrix assembly. Involved in the organization of skeletal muscles and in the formation of neuromuscular junctions. The chain is von Willebrand factor A domain-containing protein 1 (Vwa1) from Mus musculus (Mouse).